Consider the following 183-residue polypeptide: Calcineurin subunit B type 2 (183 aa).

G2 is lipidated: N-myristoyl glycine. EF-hand domains follow at residues R25–P60, R64–K92, D94–S129, and Q135–N170. Ca(2+)-binding residues include D107, N109, D111, and E118.

This sequence belongs to the calcineurin regulatory subunit family. Calcineurin is composed of a catalytic subunit (A) and a regulatory subunit (B).

Its function is as follows. Regulatory subunit of calcineurin, a calcium-dependent, calmodulin stimulated protein phosphatase. Confers calcium sensitivity. The polypeptide is Calcineurin subunit B type 2 (cnbB) (Dictyostelium discoideum (Social amoeba)).